The sequence spans 613 residues: Oxidoreductase GME11365 (613 aa).

3 Plastocyanin-like domains span residues 72–188, 198–331, and 431–571; these read ISEA…HGPS, PLLI…WIHG, and VDWR…EQPS.

The protein belongs to the multicopper oxidase family.

It functions in the pathway secondary metabolite biosynthesis. Functionally, oxidoreductase; part of the gene cluster that mediates the biosynthesis of dibenzodioxocinones such as pestalotiollide B, a novel class of inhibitors against cholesterol ester transfer protein (CEPT). The biosynthesis initiates from condensation of acetate and malonate units catalyzed by the non-reducing PKS pks8/GME11356. Pks8/GME11356 lacks a thioesterase (TE) domain, which is important to the cyclizing of the third ring of atrochrysone carboxylic acid, and the esterase GME11355 might play the role of TE and catalyzes the cyclization reaction of the C ring. The lactamase-like protein GME11357 (or other beta-lactamases in Pestalotiopsis microspora) probably hydrolyzes the thioester bond between the ACP of pks8/GME11356 and the intermediate to release atrochrysone carboxylic acid, which is spontaneously dehydrates to form endocrocin anthrone. Endocrocin anthrone is further converted to emodin via the endocrocin intermediate. Emodin is then oxidized by several enzymes such as the Baeyer-Villiger oxidase GME11358, the oxidoreductase GME11367, the short chain dehydrogenase/reductase GME11373, as well as by other oxidoreductases from the cluster, to modify the A and C rings and open the B ring, and finally yield monodictyphenone. The prenyltransferase GME11375 may catalyze the addition reaction between the C5 side chains and the carbon bone of dibenzodioxocinones. The remaining biochemical reactions to the final product dibenzodioxocinones should be methylation catalyzed by methyltransferase GME11366 and reduction and lactonization reaction catalyzed by a series of oxidordeuctases. This Pestalotiopsis microspora protein is Oxidoreductase GME11365.